We begin with the raw amino-acid sequence, 361 residues long: MMDSPKKLGYHMPAEYEPHHGTLMIWPTRPGSWPFQGKAAKRAFTQIIETIAEGERVYLLVEQAYLSEAQSYLGDKVVYLDIPTNDAWARDTGPTILVNDKGKKLAVDWAFNAWGGTYDGLYQDYEEDDQVASRFAEALERPVYDAKPFVLEGGAIHSDGQGTILVTESCLLSPGRNPNLTKEEIENTLLESLGAEKVIWLPYGIYQDETNEHVDNVAAFVGPAELVLAWTDDENDPQYAMSKADLELLEQETDAKGCHFTIHKLPIPAVRQVVTEEDLPGYIYEEGEEKRYAGERLAASYVNFYIANKAVLVPQFEDVNDQVALDILSKCFPDRKVVGIPARDILLGGGNIHCITQQIPE.

The Amidino-cysteine intermediate role is filled by Cys354.

Belongs to the agmatine deiminase family.

The enzyme catalyses agmatine + H2O = N-carbamoylputrescine + NH4(+). This chain is Putative agmatine deiminase, found in Streptococcus pneumoniae (strain 70585).